Consider the following 328-residue polypeptide: UPF0194 membrane protein YPA_1093 (328 aa).

The N-terminal stretch at 1–22 (MNRKKIIVAAVIVALLATLAYG) is a signal peptide. 2 coiled-coil regions span residues 80-109 (YLNALKQAQANVQSAQAQLALLKAGYREEE) and 141-209 (KAVS…ILLA).

It belongs to the UPF0194 family.

The protein resides in the periplasm. This Yersinia pestis bv. Antiqua (strain Antiqua) protein is UPF0194 membrane protein YPA_1093.